Reading from the N-terminus, the 260-residue chain is Tryptophan synthase alpha chain (260 aa).

Residues E52 and D63 each act as proton acceptor in the active site.

The protein belongs to the TrpA family. As to quaternary structure, tetramer of two alpha and two beta chains.

It catalyses the reaction (1S,2R)-1-C-(indol-3-yl)glycerol 3-phosphate + L-serine = D-glyceraldehyde 3-phosphate + L-tryptophan + H2O. It participates in amino-acid biosynthesis; L-tryptophan biosynthesis; L-tryptophan from chorismate: step 5/5. Functionally, the alpha subunit is responsible for the aldol cleavage of indoleglycerol phosphate to indole and glyceraldehyde 3-phosphate. This chain is Tryptophan synthase alpha chain, found in Streptococcus mutans serotype c (strain ATCC 700610 / UA159).